Consider the following 763-residue polypeptide: MSELLSFALFLASVLIYAWKAGRNTWWFAATLTVLGLFVVLNITLFASDYFTGDGINDAVLYTLTNSLTGAGVSKYILPGIGIVLGLTAVFGALGWILRRRRHHPHHFGYSLLALLLALGSVDASPAFRQITELVKSQSRDGDPDFAAYYKEPSKTIPDPKLNLVYIYGESLERTYFDNEAFPDLTPELGALKNEGLDFSHTQQLPGTDYTIAGMVASQCGIPLFAPFEGNASASVSSFFPQNICLGDILKNSGYQNYFVQGANLRFAGKDVFLKSHGFDHLFGSEELKSVVADPHYRNDWGFYDDTVLDEAWKKFEELSRSGQRFSLFTLTVDTHHPDGFISRTCNRKKYDFDGKPNQSFSAVSCSQENIATFINKIKASPWFKDTVIVVSSDHLAMNNTAWKYLNKQDRNNLFFVIRGDKPQQETLAVKRNTMDNGATVLDILGGDNYLGLGRSSLSGQSMSEIFLNIKEKTLAWKPDIIRLWKFPKEMKEFTIDQQKNMIAFSGSHFRLPLLLRVSDKRVEPLPESEYSAPLRFQLADFAPRDNFVWVDRCYKMAQLWAPELALSTNWCVSQGQLGGQQIVQHVDKTTWKGKTAFKDTVIDMARYKGNVDTLKIVDNDIRYKADSFIFNVAGAPEEVKQFSGISRPESWGRWSNAQLGDEVKIEYKHPLPKKFDLVITAKAYGNNASRPIPVRVGNEEQTLVLGNEVTTTTLHFDNPTDADTLVIVPPEPVSTNEGNILGHSPRKLGIGMVEIKVVEREG.

The next 4 membrane-spanning stretches (helical) occupy residues 1-21 (MSEL…AWKA), 26-46 (WWFA…ITLF), 77-97 (ILPG…LGWI), and 108-128 (FGYS…SPAF).

The protein belongs to the OpgB family.

It localises to the cell inner membrane. It catalyses the reaction a phosphatidylglycerol + a membrane-derived-oligosaccharide D-glucose = a 1,2-diacyl-sn-glycerol + a membrane-derived-oligosaccharide 6-(glycerophospho)-D-glucose.. It functions in the pathway glycan metabolism; osmoregulated periplasmic glucan (OPG) biosynthesis. Transfers a phosphoglycerol residue from phosphatidylglycerol to the membrane-bound nascent glucan backbones. The sequence is that of Phosphoglycerol transferase I from Escherichia coli (strain SMS-3-5 / SECEC).